The sequence spans 126 residues: Holo-[acyl-carrier-protein] synthase (126 aa).

Positions 8 and 57 each coordinate Mg(2+).

Belongs to the P-Pant transferase superfamily. AcpS family. The cofactor is Mg(2+).

It localises to the cytoplasm. The enzyme catalyses apo-[ACP] + CoA = holo-[ACP] + adenosine 3',5'-bisphosphate + H(+). In terms of biological role, transfers the 4'-phosphopantetheine moiety from coenzyme A to a Ser of acyl-carrier-protein. This is Holo-[acyl-carrier-protein] synthase from Geobacter sulfurreducens (strain ATCC 51573 / DSM 12127 / PCA).